The sequence spans 360 residues: Holliday junction branch migration complex subunit RuvB (360 aa).

A disordered region spans residues 1–46 (MAIKRSGNSDRPAKNPSSTPGTNAPTLLSPTPTHQEKETSEEKIRP). The large ATPase domain (RuvB-L) stretch occupies residues 13–205 (AKNPSSTPGT…FGLIQRLRFY (193 aa)). Polar residues predominate over residues 15–33 (NPSSTPGTNAPTLLSPTPT). Over residues 34-46 (HQEKETSEEKIRP) the composition is skewed to basic and acidic residues. Residues isoleucine 44, arginine 45, glycine 86, lysine 89, threonine 90, threonine 91, 152 to 154 (EDY), arginine 195, tyrosine 205, and arginine 242 contribute to the ATP site. Position 90 (threonine 90) interacts with Mg(2+). The small ATPAse domain (RuvB-S) stretch occupies residues 206–276 (EVDELTLIVL…LASEALDIYQ (71 aa)). A head domain (RuvB-H) region spans residues 279–360 (KQGLDWIDRL…LTSEEQLSIF (82 aa)). Arginine 334 and arginine 339 together coordinate DNA.

Belongs to the RuvB family. In terms of assembly, homohexamer. Forms an RuvA(8)-RuvB(12)-Holliday junction (HJ) complex. HJ DNA is sandwiched between 2 RuvA tetramers; dsDNA enters through RuvA and exits via RuvB. An RuvB hexamer assembles on each DNA strand where it exits the tetramer. Each RuvB hexamer is contacted by two RuvA subunits (via domain III) on 2 adjacent RuvB subunits; this complex drives branch migration. In the full resolvosome a probable DNA-RuvA(4)-RuvB(12)-RuvC(2) complex forms which resolves the HJ.

The protein resides in the cytoplasm. The enzyme catalyses ATP + H2O = ADP + phosphate + H(+). The RuvA-RuvB-RuvC complex processes Holliday junction (HJ) DNA during genetic recombination and DNA repair, while the RuvA-RuvB complex plays an important role in the rescue of blocked DNA replication forks via replication fork reversal (RFR). RuvA specifically binds to HJ cruciform DNA, conferring on it an open structure. The RuvB hexamer acts as an ATP-dependent pump, pulling dsDNA into and through the RuvAB complex. RuvB forms 2 homohexamers on either side of HJ DNA bound by 1 or 2 RuvA tetramers; 4 subunits per hexamer contact DNA at a time. Coordinated motions by a converter formed by DNA-disengaged RuvB subunits stimulates ATP hydrolysis and nucleotide exchange. Immobilization of the converter enables RuvB to convert the ATP-contained energy into a lever motion, pulling 2 nucleotides of DNA out of the RuvA tetramer per ATP hydrolyzed, thus driving DNA branch migration. The RuvB motors rotate together with the DNA substrate, which together with the progressing nucleotide cycle form the mechanistic basis for DNA recombination by continuous HJ branch migration. Branch migration allows RuvC to scan DNA until it finds its consensus sequence, where it cleaves and resolves cruciform DNA. In Rippkaea orientalis (strain PCC 8801 / RF-1) (Cyanothece sp. (strain PCC 8801)), this protein is Holliday junction branch migration complex subunit RuvB.